Here is a 255-residue protein sequence, read N- to C-terminus: 4-hydroxy-tetrahydrodipicolinate reductase (255 aa).

Residues 8–13, 88–90, and 112–115 each bind NAD(+); these read GANGRV, GTT, and ATNM. His144 (proton donor/acceptor) is an active-site residue. His145 contributes to the (S)-2,3,4,5-tetrahydrodipicolinate binding site. Lys148 functions as the Proton donor in the catalytic mechanism. 154–155 provides a ligand contact to (S)-2,3,4,5-tetrahydrodipicolinate; it reads GT.

This sequence belongs to the DapB family.

Its subcellular location is the cytoplasm. It catalyses the reaction (S)-2,3,4,5-tetrahydrodipicolinate + NAD(+) + H2O = (2S,4S)-4-hydroxy-2,3,4,5-tetrahydrodipicolinate + NADH + H(+). It carries out the reaction (S)-2,3,4,5-tetrahydrodipicolinate + NADP(+) + H2O = (2S,4S)-4-hydroxy-2,3,4,5-tetrahydrodipicolinate + NADPH + H(+). It participates in amino-acid biosynthesis; L-lysine biosynthesis via DAP pathway; (S)-tetrahydrodipicolinate from L-aspartate: step 4/4. Functionally, catalyzes the conversion of 4-hydroxy-tetrahydrodipicolinate (HTPA) to tetrahydrodipicolinate. This chain is 4-hydroxy-tetrahydrodipicolinate reductase, found in Sulfurimonas denitrificans (strain ATCC 33889 / DSM 1251) (Thiomicrospira denitrificans (strain ATCC 33889 / DSM 1251)).